The chain runs to 545 residues: ATP synthase subunit alpha (545 aa).

173–180 lines the ATP pocket; it reads GDRQTGKS.

It belongs to the ATPase alpha/beta chains family. In terms of assembly, F-type ATPases have 2 components, CF(1) - the catalytic core - and CF(0) - the membrane proton channel. CF(1) has five subunits: alpha(3), beta(3), gamma(1), delta(1), epsilon(1). CF(0) has three main subunits: a(1), b(2) and c(9-12). The alpha and beta chains form an alternating ring which encloses part of the gamma chain. CF(1) is attached to CF(0) by a central stalk formed by the gamma and epsilon chains, while a peripheral stalk is formed by the delta and b chains.

Its subcellular location is the cell membrane. The enzyme catalyses ATP + H2O + 4 H(+)(in) = ADP + phosphate + 5 H(+)(out). Its function is as follows. Produces ATP from ADP in the presence of a proton gradient across the membrane. The alpha chain is a regulatory subunit. The chain is ATP synthase subunit alpha from Pseudarthrobacter chlorophenolicus (strain ATCC 700700 / DSM 12829 / CIP 107037 / JCM 12360 / KCTC 9906 / NCIMB 13794 / A6) (Arthrobacter chlorophenolicus).